A 230-amino-acid polypeptide reads, in one-letter code: Ion-translocating oxidoreductase complex subunit E (230 aa).

Transmembrane regions (helical) follow at residues 18–38 (ALVQ…ATNA), 39–59 (LGLG…VSAL), 63–83 (TPAE…VSAV), 86–106 (LINA…PLIV), 125–145 (WLSA…MFVL), and 182–202 (PFLL…MLAV).

Belongs to the NqrDE/RnfAE family. The complex is composed of six subunits: RsxA, RsxB, RsxC, RsxD, RsxE and RsxG.

The protein resides in the cell inner membrane. In terms of biological role, part of a membrane-bound complex that couples electron transfer with translocation of ions across the membrane. Required to maintain the reduced state of SoxR. In Salmonella arizonae (strain ATCC BAA-731 / CDC346-86 / RSK2980), this protein is Ion-translocating oxidoreductase complex subunit E.